The following is a 235-amino-acid chain: uncharacterized protein (235 aa).

A run of 7 helical transmembrane segments spans residues 2 to 22 (VIGP…GALL), 34 to 54 (MTSI…VKCA), 56 to 76 (LPAM…CLLE), 102 to 122 (FIQN…GIFG), 147 to 167 (MIFA…LLII), 178 to 198 (ILPL…GLLL), and 210 to 230 (MFPV…SAAW).

It is found in the cell membrane. This is an uncharacterized protein from Escherichia coli (strain K12).